The chain runs to 91 residues: Ribonuclease P protein component 4 (91 aa).

Zn(2+) is bound by residues Cys48, Cys51, Cys71, and Cys74.

Belongs to the eukaryotic/archaeal RNase P protein component 4 family. In terms of assembly, consists of a catalytic RNA component and at least 4-5 protein subunits. The cofactor is Zn(2+).

Its subcellular location is the cytoplasm. It catalyses the reaction Endonucleolytic cleavage of RNA, removing 5'-extranucleotides from tRNA precursor.. Part of ribonuclease P, a protein complex that generates mature tRNA molecules by cleaving their 5'-ends. This is Ribonuclease P protein component 4 from Picrophilus torridus (strain ATCC 700027 / DSM 9790 / JCM 10055 / NBRC 100828 / KAW 2/3).